Reading from the N-terminus, the 138-residue chain is Large ribosomal subunit protein uL16 (138 aa).

The segment covering 1–16 (MLIPRRVKHRKQHHPS) has biased composition (basic residues). A disordered region spans residues 1–25 (MLIPRRVKHRKQHHPSRSGAAKGGT).

Belongs to the universal ribosomal protein uL16 family. As to quaternary structure, part of the 50S ribosomal subunit.

In terms of biological role, binds 23S rRNA and is also seen to make contacts with the A and possibly P site tRNAs. The protein is Large ribosomal subunit protein uL16 of Rhodococcus erythropolis (strain PR4 / NBRC 100887).